Consider the following 88-residue polypeptide: Small ribosomal subunit protein bS16 (88 aa).

Belongs to the bacterial ribosomal protein bS16 family.

In Staphylococcus saprophyticus subsp. saprophyticus (strain ATCC 15305 / DSM 20229 / NCIMB 8711 / NCTC 7292 / S-41), this protein is Small ribosomal subunit protein bS16.